Reading from the N-terminus, the 292-residue chain is Putative rRNA 2'-O-methyltransferase fibrillarin 3 (292 aa).

The segment at 1 to 58 is disordered; it reads MKPPQRGRGGGVRGGRGLARGGEGSAVRGSGRGGESGRGRGPGRVKSESDGGIKGGSK. Over residues 7–42 the composition is skewed to gly residues; it reads GRGGGVRGGRGLARGGEGSAVRGSGRGGESGRGRGP. S-adenosyl-L-methionine-binding positions include 146–147, 165–166, 190–191, and 210–213; these read YT, EH, DA, and DVNH.

This sequence belongs to the methyltransferase superfamily. Fibrillarin family. Component of box C/D small nucleolar ribonucleoprotein (snoRNP) particles. Not detectable by RT-PCR.

It localises to the nucleus. It is found in the nucleolus. The enzyme catalyses L-glutaminyl-[histone H2A] + S-adenosyl-L-methionine = N(5)-methyl-L-glutaminyl-[histone H2A] + S-adenosyl-L-homocysteine + H(+). Its function is as follows. S-adenosyl-L-methionine-dependent methyltransferase that has the ability to methylate both RNAs and proteins. Involved in pre-rRNA processing. Utilizes the methyl donor S-adenosyl-L-methionine to catalyze the site-specific 2'-hydroxyl methylation of ribose moieties in pre-ribosomal RNA. Site specificity is provided by a guide RNA that base pairs with the substrate. Methylation occurs at a characteristic distance from the sequence involved in base pairing with the guide RNA. Also acts as a protein methyltransferase by mediating methylation of 'Gln-105' of histone H2A (H2AQ105me), a modification that impairs binding of the FACT complex and is specifically present at 35S ribosomal DNA locus. In Arabidopsis thaliana (Mouse-ear cress), this protein is Putative rRNA 2'-O-methyltransferase fibrillarin 3 (FIB3).